The sequence spans 344 residues: S-adenosylmethionine:tRNA ribosyltransferase-isomerase (344 aa).

Belongs to the QueA family. In terms of assembly, monomer.

It localises to the cytoplasm. The enzyme catalyses 7-aminomethyl-7-carbaguanosine(34) in tRNA + S-adenosyl-L-methionine = epoxyqueuosine(34) in tRNA + adenine + L-methionine + 2 H(+). Its pathway is tRNA modification; tRNA-queuosine biosynthesis. In terms of biological role, transfers and isomerizes the ribose moiety from AdoMet to the 7-aminomethyl group of 7-deazaguanine (preQ1-tRNA) to give epoxyqueuosine (oQ-tRNA). In Thiobacillus denitrificans (strain ATCC 25259 / T1), this protein is S-adenosylmethionine:tRNA ribosyltransferase-isomerase.